The chain runs to 1522 residues: Myosin-15 (1522 aa).

Residues 12–61 (RKGDKVWVEDKDLAWIAADVLDSFDNKLHVETSTGKKVFVSPEKLFRRDP) form the Myosin N-terminal SH3-like domain. The region spanning 67–737 (NGVDDMTKLT…QIGILDSRRA (671 aa)) is the Myosin motor domain. ATP-binding positions include 161–168 (GESGAGKT) and 214–222 (NDNSSRFGK). Actin-binding stretches follow at residues 499 to 533 (LIEK…FQNF), 535 to 558 (FHPR…AGKV), 593 to 618 (FPSA…KQQL), and 618 to 640 (LQAL…KPNS). 5 consecutive IQ domains span residues 763–792 (ARAS…AAAA), 788–817 (NAAA…AAIV), 811–840 (LVSA…HRAA), 836–865 (EHRA…SIIA), and 859–888 (RQSS…VANE). The stretch at 889–1059 (AGALRLAKTK…NQVLMQKTLI (171 aa)) forms a coiled coil. One can recognise a Dilute domain in the interval 1164–1456 (NIIIEGINEA…VSQMRVLVDK (293 aa)).

This sequence belongs to the TRAFAC class myosin-kinesin ATPase superfamily. Myosin family. Plant myosin class XI subfamily. Homodimer. Interacts with MYOB1 and MYOB7. Interacts with WIT1 and WIT2. Core component of the LINC complex which is composed of inner nuclear membrane SUN domain-containing proteins coupled to outer nuclear membrane WIP and WIT proteins. The LINC complex also involves nucleoskeletal proteins CRWN/LINC and possibly KAKU4 and the cytoskeletal myosin KAKU1.

The protein localises to the cytoplasm. It is found in the nucleus membrane. In terms of biological role, myosin heavy chain that is required for the cell cycle-regulated transport of various organelles and proteins for their segregation. Functions by binding with its tail domain to receptor proteins on organelles and exerting force with its N-terminal motor domain against actin filaments, thereby transporting its cargo along polarized actin cables. Involved in trafficking of Golgi stacks and mitochondria. Plays a role in nuclear shape determination. Drives nuclear movement along actin filaments. As component of the SUN-WIP-WIT2-KAKU1 complex, mediates the transfer of cytoplasmic forces to the nuclear envelope (NE), leading to nuclear shape changes. The polypeptide is Myosin-15 (XI-I) (Arabidopsis thaliana (Mouse-ear cress)).